Here is a 57-residue protein sequence, read N- to C-terminus: Large ribosomal subunit protein bL33 (57 aa).

It belongs to the bacterial ribosomal protein bL33 family.

The polypeptide is Large ribosomal subunit protein bL33 (Shewanella sp. (strain W3-18-1)).